The chain runs to 418 residues: tRNA-2-methylthio-N(6)-dimethylallyladenosine synthase (418 aa).

The 117-residue stretch at proline 2–leucine 118 folds into the MTTase N-terminal domain. [4Fe-4S] cluster is bound by residues cysteine 11, cysteine 47, cysteine 81, cysteine 134, cysteine 138, and cysteine 141. Residues leucine 120–alanine 352 form the Radical SAM core domain. One can recognise a TRAM domain in the interval serine 354 to lysine 414.

It belongs to the methylthiotransferase family. MiaB subfamily. In terms of assembly, monomer. The cofactor is [4Fe-4S] cluster.

It localises to the cytoplasm. It carries out the reaction N(6)-dimethylallyladenosine(37) in tRNA + (sulfur carrier)-SH + AH2 + 2 S-adenosyl-L-methionine = 2-methylsulfanyl-N(6)-dimethylallyladenosine(37) in tRNA + (sulfur carrier)-H + 5'-deoxyadenosine + L-methionine + A + S-adenosyl-L-homocysteine + 2 H(+). Catalyzes the methylthiolation of N6-(dimethylallyl)adenosine (i(6)A), leading to the formation of 2-methylthio-N6-(dimethylallyl)adenosine (ms(2)i(6)A) at position 37 in tRNAs that read codons beginning with uridine. This Dehalococcoides mccartyi (strain ATCC BAA-2266 / KCTC 15142 / 195) (Dehalococcoides ethenogenes (strain 195)) protein is tRNA-2-methylthio-N(6)-dimethylallyladenosine synthase.